The sequence spans 567 residues: PCNA-interacting partner (567 aa).

The segment at 485–552 (IDLKTAEQVK…GVSRNKASKN (68 aa)) is disordered. 2 stretches are compositionally biased toward polar residues: residues 512–524 (DIQS…QENE) and 534–552 (LTSS…ASKN).

Belongs to the PARI family.

The protein resides in the cytoplasm. It is found in the nucleus. In terms of biological role, required to suppress inappropriate homologous recombination, thereby playing a central role DNA repair and in the maintenance of genomic stability. This Xenopus laevis (African clawed frog) protein is PCNA-interacting partner (parpbp).